The following is a 253-amino-acid chain: AA9 family lytic polysaccharide monooxygenase F (253 aa).

Residues Met-1–Ala-16 form the signal peptide. A Cu(2+)-binding site is contributed by His-17. A glycan (N-linked (GlcNAc...) asparagine) is linked at Asn-22. 2 cysteine pairs are disulfide-bonded: Cys-75-Cys-193 and Cys-163-Cys-253. His-105 contacts Cu(2+). N-linked (GlcNAc...) asparagine glycosylation occurs at Asn-143. O2 contacts are provided by His-179 and Gln-188. Cu(2+) is bound at residue Tyr-190.

The protein belongs to the polysaccharide monooxygenase AA9 family. The cofactor is Cu(2+).

The protein resides in the secreted. It carries out the reaction [(1-&gt;4)-beta-D-glucosyl]n+m + reduced acceptor + O2 = 4-dehydro-beta-D-glucosyl-[(1-&gt;4)-beta-D-glucosyl]n-1 + [(1-&gt;4)-beta-D-glucosyl]m + acceptor + H2O.. Lytic polysaccharide monooxygenase (LPMO) that depolymerizes crystalline and amorphous polysaccharides via the oxidation of scissile alpha- or beta-(1-4)-glycosidic bonds, yielding C1 or C4 oxidation products. Catalysis by LPMOs requires the reduction of the active-site copper from Cu(II) to Cu(I) by a reducing agent and H(2)O(2) or O(2) as a cosubstrate. The protein is AA9 family lytic polysaccharide monooxygenase F of Podospora anserina (strain S / ATCC MYA-4624 / DSM 980 / FGSC 10383) (Pleurage anserina).